A 356-amino-acid polypeptide reads, in one-letter code: Inactive ubiquitin thioesterase OTULINL (356 aa).

The tract at residues 1 to 22 is disordered; it reads MAATRSPTRARERERSGAPAAG. Residues 1–83 form a required for membrane binding region; sequence MAATRSPTRA…KWWIGYLQRK (83 aa). Residues 128–356 form the OTU domain; that stretch reads KCVRQVRRDN…NDRHYHIPVF (229 aa).

This sequence belongs to the peptidase C65 family. Otulin subfamily. As to quaternary structure, does not bind ubiquitin or ubiquitin-like proteins.

The protein resides in the cytoplasm. The protein localises to the endoplasmic reticulum membrane. It localises to the nucleus envelope. In terms of biological role, lacks deubiquitinase activity. This chain is Inactive ubiquitin thioesterase OTULINL, found in Homo sapiens (Human).